The sequence spans 436 residues: MTRLQNLTTRQGERIAVVSGLRTPFARQATAFNGVPALDMGKMVVNEMLQELDFDPKLIEQVVFGQVVQMPEAPNIAREIVLGTGMHIGTDAYSVTRACATSFQAAANVAESIISGTIDIGIAGGADSSSVLPIGVSKKLAATLLALSKARTMSKRLKLLSTLSVKDLMPVPPAVAEYSTGISMGQTAEQMAKSHGITRQEQDALAYRSHTLAAKAWKDGLIRGEVMTAFPEPYGQWIDKDNNIREDSTLESYAKLRPAFDRKFGTVTAANSTPLTDGAAAILLMREGRAKELGLKPLGYIRSYAFSAIGVEQDMLMGPSYATPMALDRAGISLSDLTLIDMHEAFAAQTLANVKMFGSKKFAQENLGRSQAIGEIDMDKFNVLGGSLAYGHPFAATGARMITQTLRELQRRGGGFALNTACAAGGLGAAMILEAE.

C99 (acyl-thioester intermediate) is an active-site residue. Residues H392 and C422 each act as proton acceptor in the active site.

Belongs to the thiolase-like superfamily. Thiolase family. In terms of assembly, heterotetramer of two alpha chains (FadJ) and two beta chains (FadI).

The protein localises to the cytoplasm. The enzyme catalyses an acyl-CoA + acetyl-CoA = a 3-oxoacyl-CoA + CoA. Its pathway is lipid metabolism; fatty acid beta-oxidation. Functionally, catalyzes the final step of fatty acid oxidation in which acetyl-CoA is released and the CoA ester of a fatty acid two carbons shorter is formed. The polypeptide is 3-ketoacyl-CoA thiolase (Photobacterium profundum (strain SS9)).